The following is a 41-amino-acid chain: Pi-stichotoxin-Hcr5a (41 aa).

Disulfide bonds link cysteine 4/cysteine 37, cysteine 6/cysteine 30, and cysteine 20/cysteine 38.

The protein belongs to the sea anemone type 3 (BDS) potassium channel toxin family.

The protein localises to the secreted. It is found in the nematocyst. In terms of biological role, weakly inhibits human homomeric ASIC3 (IC(50)=5.5 uM). The sequence is that of Pi-stichotoxin-Hcr5a from Radianthus crispa (Leathery sea anemone).